The sequence spans 214 residues: Probable transaldolase (214 aa).

Catalysis depends on lysine 83, which acts as the Schiff-base intermediate with substrate.

This sequence belongs to the transaldolase family. Type 3B subfamily.

It is found in the cytoplasm. The catalysed reaction is D-sedoheptulose 7-phosphate + D-glyceraldehyde 3-phosphate = D-erythrose 4-phosphate + beta-D-fructose 6-phosphate. It participates in carbohydrate degradation; pentose phosphate pathway; D-glyceraldehyde 3-phosphate and beta-D-fructose 6-phosphate from D-ribose 5-phosphate and D-xylulose 5-phosphate (non-oxidative stage): step 2/3. Functionally, transaldolase is important for the balance of metabolites in the pentose-phosphate pathway. The polypeptide is Probable transaldolase (Leptospira biflexa serovar Patoc (strain Patoc 1 / Ames)).